A 103-amino-acid polypeptide reads, in one-letter code: Histone H4 (103 aa).

A compositionally biased stretch (gly residues) spans 1–14; that stretch reads MSGRGKGGKGLGKG. The segment at 1–20 is disordered; it reads MSGRGKGGKGLGKGGAKRHR. The DNA-binding element occupies 17-21; it reads KRHRK.

It belongs to the histone H4 family. In terms of assembly, the nucleosome is a histone octamer containing two molecules each of H2A, H2B, H3 and H4 assembled in one H3-H4 heterotetramer and two H2A-H2B heterodimers. The octamer wraps approximately 147 bp of DNA.

The protein localises to the nucleus. It is found in the chromosome. Its function is as follows. Core component of nucleosome. Nucleosomes wrap and compact DNA into chromatin, limiting DNA accessibility to the cellular machineries which require DNA as a template. Histones thereby play a central role in transcription regulation, DNA repair, DNA replication and chromosomal stability. DNA accessibility is regulated via a complex set of post-translational modifications of histones, also called histone code, and nucleosome remodeling. This chain is Histone H4 (H4-I), found in Volvox carteri (Green alga).